The chain runs to 852 residues: Envelope glycoprotein gp160 (852 aa).

An N-terminal signal peptide occupies residues 1–24 (MAHVNNYLLVTLLLISIYGYMGKN). The Extracellular segment spans residues 25-677 (FVTVFYGIPA…FTSWMAYIRL (653 aa)). Asn-37 is a glycosylation site (N-linked (GlcNAc...) asparagine; by host). Cysteines 44 and 57 form a disulfide. N-linked (GlcNAc...) asparagine; by host glycosylation is found at Asn-70, Asn-114, Asn-148, Asn-195, Asn-205, Asn-237, Asn-247, Asn-270, Asn-276, Asn-287, and Asn-298. 4 disulfide bridges follow: Cys-101-Cys-213, Cys-108-Cys-204, Cys-113-Cys-162, and Cys-236-Cys-248. The segment at 113–161 (CNKTWSSASKETTTSSASLRSSTQTLLNEDSKCIQNDSCAGIGLEEMID) is V1. The segment at 162–204 (CQFKMTGLKRDESKQYKDTWYKQDLVCEKGTRSNESKCYIKTC) is V2. The segment at 303 to 335 (CKRPGNKMVVPIRTVSGILFHSQPINKRPKQAW) is V3. Cys-303 and Cys-336 form a disulfide bridge. N-linked (GlcNAc...) asparagine; by host glycosylation is found at Asn-341, Asn-364, Asn-396, Asn-406, Asn-445, Asn-461, and Asn-464. Intrachain disulfides connect Cys-388/Cys-444 and Cys-395/Cys-417. The V4 stretch occupies residues 395–417 (CNMTFFLNWVENRTGLKRNYASC). A V5 region spans residues 461–467 (NLTNITV). The fusion peptide stretch occupies residues 510-530 (GVLVLGFLGFLATAGSAMGAA). The tract at residues 573 to 589 (LQARVTAIEKYLKDQAQ) is immunosuppression. Asn-609, Asn-618, and Asn-634 each carry an N-linked (GlcNAc...) asparagine; by host glycan. Residues 622-648 (QQWERQVRFLDANITKLLEEAQIQQEK) adopt a coiled-coil conformation. Residues 655-676 (KLNQWDIFSNWFDFTSWMAYIR) form an MPER; binding to GalCer region. A helical membrane pass occupies residues 678 to 698 (GLYIVIGIVVLRIAIYIIQML). At 699–852 (ARLRKGYRPV…IRQGAELALL (154 aa)) the chain is on the cytoplasmic side. Positions 705–708 (YRPV) match the YXXV motif; contains endocytosis signal motif. The segment at 713–740 (PSYTQQIPIRKDRGQPANEETEEGGGNN) is disordered. The S-palmitoyl cysteine; by host moiety is linked to residue Cys-771. Residues 851–852 (LL) carry the Di-leucine internalization motif motif.

As to quaternary structure, the mature envelope protein (Env) consists of a homotrimer of non-covalently associated gp120-gp41 heterodimers. The resulting complex protrudes from the virus surface as a spike. There seems to be as few as 10 spikes on the average virion. Interacts with human CD4, CCR5 and CXCR4, to form a P4HB/PDI-CD4-CXCR4-gp120 complex. Gp120 also interacts with the C-type lectins CD209/DC-SIGN and CLEC4M/DC-SIGNR (collectively referred to as DC-SIGN(R)). Gp120 and gp41 interact with GalCer. In terms of assembly, the mature envelope protein (Env) consists of a homotrimer of non-covalently associated gp120-gp41 heterodimers. The resulting complex protrudes from the virus surface as a spike. There seems to be as few as 10 spikes on the average virion. In terms of processing, specific enzymatic cleavages in vivo yield mature proteins. Envelope glycoproteins are synthesized as an inactive precursor that is heavily N-glycosylated and processed likely by host cell furin in the Golgi to yield the mature SU and TM proteins. The cleavage site between SU and TM requires the minimal sequence [KR]-X-[KR]-R. Post-translationally, palmitoylation of the transmembrane protein and of Env polyprotein (prior to its proteolytic cleavage) is essential for their association with host cell membrane lipid rafts. Palmitoylation is therefore required for envelope trafficking to classical lipid rafts, but not for viral replication.

Its subcellular location is the virion membrane. The protein localises to the host cell membrane. It localises to the host endosome membrane. In terms of biological role, the surface protein gp120 (SU) attaches the virus to the host lymphoid cell by binding to the primary receptor CD4. This interaction induces a structural rearrangement creating a high affinity binding site for a chemokine coreceptor like CXCR4 and/or CCR5. This peculiar 2 stage receptor-interaction strategy allows gp120 to maintain the highly conserved coreceptor-binding site in a cryptic conformation, protected from neutralizing antibodies. Since CD4 also displays a binding site for the disulfide-isomerase P4HB/PDI, a P4HB/PDI-CD4-CXCR4-gp120 complex may form. In that complex, P4HB/PDI could reach and reduce gp120 disulfide bonds, causing major conformational changes in gp120. TXN, another PDI family member could also be involved in disulfide rearrangements in Env during fusion. These changes are transmitted to the transmembrane protein gp41 and are thought to activate its fusogenic potential by unmasking its fusion peptide. Functionally, the surface protein gp120 is a ligand for CD209/DC-SIGN and CLEC4M/DC-SIGNR, which are respectively found on dendritic cells (DCs), and on endothelial cells of liver sinusoids and lymph node sinuses. These interactions allow capture of viral particles at mucosal surfaces by these cells and subsequent transmission to permissive cells. DCs are professional antigen presenting cells, critical for host immunity by inducing specific immune responses against a broad variety of pathogens. They act as sentinels in various tissues where they take up antigen, process it, and present it to T-cells following migration to lymphoid organs. HIV subverts the migration properties of dendritic cells to gain access to CD4+ T-cells in lymph nodes. Virus transmission to permissive T-cells occurs either in trans (without DCs infection, through viral capture and transmission), or in cis (following DCs productive infection, through the usual CD4-gp120 interaction), thereby inducing a robust infection. In trans infection, bound virions remain infectious over days and it is proposed that they are not degraded, but protected in non-lysosomal acidic organelles within the DCs close to the cell membrane thus contributing to the viral infectious potential during DCs' migration from the periphery to the lymphoid tissues. On arrival at lymphoid tissues, intact virions recycle back to DCs' cell surface allowing virus transmission to CD4+ T-cells. Virion capture also seems to lead to MHC-II-restricted viral antigen presentation, and probably to the activation of HIV-specific CD4+ cells. Its function is as follows. The transmembrane protein gp41 (TM) acts as a class I viral fusion protein. Under the current model, the protein has at least 3 conformational states: pre-fusion native state, pre-hairpin intermediate state, and post-fusion hairpin state. During fusion of viral and target intracellular membranes, the coiled coil regions (heptad repeats) assume a trimer-of-hairpins structure, positioning the fusion peptide in close proximity to the C-terminal region of the ectodomain. The formation of this structure appears to drive apposition and subsequent fusion of viral and target cell membranes. Complete fusion occurs in host cell endosomes and is dynamin-dependent, however some lipid transfer might occur at the plasma membrane. The virus undergoes clathrin-dependent internalization long before endosomal fusion, thus minimizing the surface exposure of conserved viral epitopes during fusion and reducing the efficacy of inhibitors targeting these epitopes. Membranes fusion leads to delivery of the nucleocapsid into the cytoplasm. The envelope glycoprotein gp160 precursor down-modulates cell surface CD4 antigen by interacting with it in the endoplasmic reticulum and blocking its transport to the cell surface. In terms of biological role, the gp120-gp41 heterodimer seems to contribute to T-cell depletion during HIV-1 infection. The envelope glycoproteins expressed on the surface of infected cells induce apoptosis through an interaction with uninfected cells expressing the receptor (CD4) and the coreceptors CXCR4 or CCR5. This type of bystander killing may be obtained by at least three distinct mechanisms. First, the interaction between the 2 cells can induce cellular fusion followed by nuclear fusion within the syncytium. Syncytia are condemned to die from apoptosis. Second, the 2 interacting cells may not fuse entirely and simply exchange plasma membrane lipids, after a sort of hemifusion process, followed by rapid death. Third, it is possible that virus-infected cells, on the point of undergoing apoptosis, fuse with CD4-expressing cells, in which case apoptosis is rapidly transmitted from one cell to the other and thus occurs in a sort of contagious fashion. Functionally, the gp120-gp41 heterodimer allows rapid transcytosis of the virus through CD4 negative cells such as simple epithelial monolayers of the intestinal, rectal and endocervical epithelial barriers. Both gp120 and gp41 specifically recognize glycosphingolipids galactosyl-ceramide (GalCer) or 3' sulfo-galactosyl-ceramide (GalS) present in the lipid rafts structures of epithelial cells. Binding to these alternative receptors allows the rapid transcytosis of the virus through the epithelial cells. This transcytotic vesicle-mediated transport of virions from the apical side to the basolateral side of the epithelial cells does not involve infection of the cells themselves. This is Envelope glycoprotein gp160 (env) from Human immunodeficiency virus type 2 subtype B (isolate EHO) (HIV-2).